We begin with the raw amino-acid sequence, 476 residues long: Ribulose bisphosphate carboxylase large chain (476 aa).

A propeptide spanning residues 1 to 2 (MS) is cleaved from the precursor. Position 3 is an N-acetylproline (Pro3). At Lys14 the chain carries N6,N6,N6-trimethyllysine. Positions 123 and 173 each coordinate substrate. Lys175 (proton acceptor) is an active-site residue. Residue Lys177 coordinates substrate. Positions 201, 203, and 204 each coordinate Mg(2+). Residue Lys201 is modified to N6-carboxylysine. His294 serves as the catalytic Proton acceptor. The substrate site is built by Arg295, His327, and Ser379.

This sequence belongs to the RuBisCO large chain family. Type I subfamily. In terms of assembly, heterohexadecamer of 8 large chains and 8 small chains; disulfide-linked. The disulfide link is formed within the large subunit homodimers. Mg(2+) serves as cofactor. In terms of processing, the disulfide bond which can form in the large chain dimeric partners within the hexadecamer appears to be associated with oxidative stress and protein turnover.

The protein resides in the plastid. It is found in the chloroplast. The enzyme catalyses 2 (2R)-3-phosphoglycerate + 2 H(+) = D-ribulose 1,5-bisphosphate + CO2 + H2O. It carries out the reaction D-ribulose 1,5-bisphosphate + O2 = 2-phosphoglycolate + (2R)-3-phosphoglycerate + 2 H(+). In terms of biological role, ruBisCO catalyzes two reactions: the carboxylation of D-ribulose 1,5-bisphosphate, the primary event in carbon dioxide fixation, as well as the oxidative fragmentation of the pentose substrate in the photorespiration process. Both reactions occur simultaneously and in competition at the same active site. This is Ribulose bisphosphate carboxylase large chain from Liriodendron tulipifera (Tuliptree).